Here is a 756-residue protein sequence, read N- to C-terminus: 5-methyltetrahydropteroyltriglutamate--homocysteine methyltransferase (756 aa).

Residues 16 to 19 (RELK) and K116 contribute to the 5-methyltetrahydropteroyltri-L-glutamate site. Residues 435-437 (IGS) and E488 each bind L-homocysteine. L-methionine-binding positions include 435-437 (IGS) and E488. 5-methyltetrahydropteroyltri-L-glutamate contacts are provided by residues 519 to 520 (RC) and W565. D603 lines the L-homocysteine pocket. D603 contributes to the L-methionine binding site. Residue E609 coordinates 5-methyltetrahydropteroyltri-L-glutamate. The Zn(2+) site is built by H645, C647, and E669. H698 serves as the catalytic Proton donor. C730 is a binding site for Zn(2+).

This sequence belongs to the vitamin-B12 independent methionine synthase family. It depends on Zn(2+) as a cofactor.

The catalysed reaction is 5-methyltetrahydropteroyltri-L-glutamate + L-homocysteine = tetrahydropteroyltri-L-glutamate + L-methionine. It participates in amino-acid biosynthesis; L-methionine biosynthesis via de novo pathway; L-methionine from L-homocysteine (MetE route): step 1/1. Functionally, catalyzes the transfer of a methyl group from 5-methyltetrahydrofolate to homocysteine resulting in methionine formation. The polypeptide is 5-methyltetrahydropteroyltriglutamate--homocysteine methyltransferase (Marinobacter nauticus (strain ATCC 700491 / DSM 11845 / VT8) (Marinobacter aquaeolei)).